A 965-amino-acid chain; its full sequence is Aminopeptidase N (965 aa).

Topologically, residues 1-8 (MAKGFYIS) are cytoplasmic. A helical; Signal-anchor for type II membrane protein transmembrane segment spans residues 9 to 32 (KALGILAILLGVAAVATIIALSVV). Positions 33–65 (YAQEKNKNAERGTAAPTSPTGPTTTSATTLDQS) are cytosolic Ser/Thr-rich junction. Over 33 to 965 (YAQEKNKNAE…VVLNWFKDHS (933 aa)) the chain is Extracellular. Residues 40–65 (NAERGTAAPTSPTGPTTTSATTLDQS) form a disordered region. Residues 44–61 (GTAAPTSPTGPTTTSATT) show a composition bias toward low complexity. Residues 66–965 (KPWNRYRLPT…VVLNWFKDHS (900 aa)) form a metalloprotease region. N-linked (GlcNAc...) asparagine glycosylation is present at Asn125. Tyr173 is subject to Sulfotyrosine. 3 N-linked (GlcNAc...) asparagine glycosylation sites follow: Asn231, Asn260, and Asn316. A substrate-binding site is contributed by 349 to 353 (GAMEN). His385 is a Zn(2+) binding site. Glu386 (proton acceptor) is an active-site residue. The Zn(2+) site is built by His389 and Glu408. The residue at position 416 (Tyr416) is a Sulfotyrosine. Residues Asn508, Asn569, Asn624, Asn680, Asn734, and Asn738 are each glycosylated (N-linked (GlcNAc...) asparagine). 2 cysteine pairs are disulfide-bonded: Cys760/Cys767 and Cys797/Cys833.

The protein belongs to the peptidase M1 family. In terms of assembly, homodimer. Interacts with SLC6A19. Zn(2+) serves as cofactor. Post-translationally, sulfated. N- and O-glycosylated. In terms of processing, may undergo proteolysis and give rise to a soluble form.

It localises to the cell membrane. It catalyses the reaction Release of an N-terminal amino acid, Xaa-|-Yaa- from a peptide, amide or arylamide. Xaa is preferably Ala, but may be most amino acids including Pro (slow action). When a terminal hydrophobic residue is followed by a prolyl residue, the two may be released as an intact Xaa-Pro dipeptide.. Functionally, broad specificity aminopeptidase which plays a role in the final digestion of peptides generated from hydrolysis of proteins by gastric and pancreatic proteases. Also involved in the processing of various peptides including peptide hormones, such as angiotensin III and IV, neuropeptides, and chemokines. May also be involved the cleavage of peptides bound to major histocompatibility complex class II molecules of antigen presenting cells. May have a role in angiogenesis and promote cholesterol crystallization. May have a role in amino acid transport by acting as binding partner of amino acid transporter SLC6A19 and regulating its activity. This is Aminopeptidase N (ANPEP) from Bos taurus (Bovine).